The following is a 282-amino-acid chain: 4-diphosphocytidyl-2-C-methyl-D-erythritol kinase (282 aa).

Lys-9 is an active-site residue. 98-108 (PMGGGLGGGSS) serves as a coordination point for ATP. Residue Asp-140 is part of the active site.

This sequence belongs to the GHMP kinase family. IspE subfamily. In terms of assembly, homodimer.

It catalyses the reaction 4-CDP-2-C-methyl-D-erythritol + ATP = 4-CDP-2-C-methyl-D-erythritol 2-phosphate + ADP + H(+). The protein operates within isoprenoid biosynthesis; isopentenyl diphosphate biosynthesis via DXP pathway; isopentenyl diphosphate from 1-deoxy-D-xylulose 5-phosphate: step 3/6. In terms of biological role, catalyzes the phosphorylation of the position 2 hydroxy group of 4-diphosphocytidyl-2C-methyl-D-erythritol. The protein is 4-diphosphocytidyl-2-C-methyl-D-erythritol kinase of Salmonella paratyphi A (strain ATCC 9150 / SARB42).